Consider the following 113-residue polypeptide: Large ribosomal subunit protein bL19 (113 aa).

The protein belongs to the bacterial ribosomal protein bL19 family.

This protein is located at the 30S-50S ribosomal subunit interface and may play a role in the structure and function of the aminoacyl-tRNA binding site. This chain is Large ribosomal subunit protein bL19 (rplS), found in Mycobacterium bovis (strain ATCC BAA-935 / AF2122/97).